The following is a 237-amino-acid chain: Protein VP5 (237 aa).

Residues 1-148 lie on the Cytoplasmic side of the membrane; that stretch reads MLSIIRRKTR…TKQRCKANLR (148 aa). Positions 84–237 are disordered; it reads SSSKDPDISG…SKLGKSRDIC (154 aa). 2 stretches are compositionally biased toward basic and acidic residues: residues 85-97 and 116-130; these read SSKDPDISGQKDK and SRVREHEPIHEHEPI. Residues 149 to 165 form a helical membrane-spanning segment; it reads GDSGFVSIGRSNHPKLS. The Extracellular portion of the chain corresponds to 166–237; sequence REDCHNTRVP…SKLGKSRDIC (72 aa). A compositionally biased stretch (basic residues) spans 214–231; that stretch reads RSHRRKKAKTRTKTSKLG.

It localises to the host membrane. The chain is Protein VP5 (VP5) from Drosophila x virus (isolate Chung/1996) (DXV).